The primary structure comprises 423 residues: Enolase (423 aa).

A (2R)-2-phosphoglycerate-binding site is contributed by glutamine 162. Glutamate 204 acts as the Proton donor in catalysis. 3 residues coordinate Mg(2+): aspartate 241, glutamate 284, and aspartate 311. The (2R)-2-phosphoglycerate site is built by lysine 336, arginine 365, serine 366, and lysine 387. Residue lysine 336 is the Proton acceptor of the active site.

This sequence belongs to the enolase family. Mg(2+) serves as cofactor.

The protein resides in the cytoplasm. It localises to the secreted. Its subcellular location is the cell surface. It carries out the reaction (2R)-2-phosphoglycerate = phosphoenolpyruvate + H2O. It functions in the pathway carbohydrate degradation; glycolysis; pyruvate from D-glyceraldehyde 3-phosphate: step 4/5. In terms of biological role, catalyzes the reversible conversion of 2-phosphoglycerate (2-PG) into phosphoenolpyruvate (PEP). It is essential for the degradation of carbohydrates via glycolysis. The protein is Enolase of Bartonella bacilliformis (strain ATCC 35685 / KC583 / Herrer 020/F12,63).